We begin with the raw amino-acid sequence, 367 residues long: Phospho-N-acetylmuramoyl-pentapeptide-transferase (367 aa).

A run of 10 helical transmembrane segments spans residues 28-48 (GALMTAMLIAFVFGKPMIGWL), 75-95 (TMGGFLILLGVMVGTLLWADL), 96-116 (TNAYVWIVIFVTAGFGVIGFI), 134-154 (FKLVGEFAIALIAVVWATHTA), 175-195 (LMINIGPLFFVFGCVVIVGSG), 206-226 (GLAIVPVMIAAATFGVIAYVV), 243-263 (AGEILIFCGALIGAGIGFLWW), 271-291 (FMGDTGSLSLGGALGTIAVAI), 295-315 (LVLAIVGGLFVLELVSVMVQV), and 344-364 (TIVIRFWIIAVILALIGLATL).

This sequence belongs to the glycosyltransferase 4 family. MraY subfamily. Mg(2+) is required as a cofactor.

Its subcellular location is the cell inner membrane. It catalyses the reaction UDP-N-acetyl-alpha-D-muramoyl-L-alanyl-gamma-D-glutamyl-meso-2,6-diaminopimeloyl-D-alanyl-D-alanine + di-trans,octa-cis-undecaprenyl phosphate = di-trans,octa-cis-undecaprenyl diphospho-N-acetyl-alpha-D-muramoyl-L-alanyl-D-glutamyl-meso-2,6-diaminopimeloyl-D-alanyl-D-alanine + UMP. It participates in cell wall biogenesis; peptidoglycan biosynthesis. Its function is as follows. Catalyzes the initial step of the lipid cycle reactions in the biosynthesis of the cell wall peptidoglycan: transfers peptidoglycan precursor phospho-MurNAc-pentapeptide from UDP-MurNAc-pentapeptide onto the lipid carrier undecaprenyl phosphate, yielding undecaprenyl-pyrophosphoryl-MurNAc-pentapeptide, known as lipid I. The sequence is that of Phospho-N-acetylmuramoyl-pentapeptide-transferase from Maricaulis maris (strain MCS10) (Caulobacter maris).